A 233-amino-acid chain; its full sequence is Lipoprotein-releasing system ATP-binding protein LolD (233 aa).

Residues 6–233 (LQCDNLCKRY…TAELSLMGAE (228 aa)) enclose the ABC transporter domain. 42–49 (GSSGSGKS) lines the ATP pocket.

This sequence belongs to the ABC transporter superfamily. Lipoprotein translocase (TC 3.A.1.125) family. In terms of assembly, the complex is composed of two ATP-binding proteins (LolD) and two transmembrane proteins (LolC and LolE).

It is found in the cell inner membrane. Part of the ABC transporter complex LolCDE involved in the translocation of mature outer membrane-directed lipoproteins, from the inner membrane to the periplasmic chaperone, LolA. Responsible for the formation of the LolA-lipoprotein complex in an ATP-dependent manner. The polypeptide is Lipoprotein-releasing system ATP-binding protein LolD (Shigella dysenteriae serotype 1 (strain Sd197)).